A 319-amino-acid chain; its full sequence is MKPVFLDFEQPIAELTNKIDELRFVQDESAVDISDEIHRLQKKSNDLTKSIFSKLTPAQISQVSRHPQRPYTLDYIEALFTDFEELHGDRHFADDYAIVGGLARFNGQSVMVVGHQKGRDTKEKIRRNFGMPRPEGYRKALRLMKTAEKFGLPVMTFIDTPGAYPGIGAEERGQSEAIGKNLYELTRLRVPVLCTVIGEGGSGGALAVALGDYVNMLQYSTYSVISPEGCASILWKTAEKAADAAQALGITADRLQKLDLVDTVIKEPLGGAHRDFGQTMKNVKAVLEKQLHEAQSIPLADLLSRRFDRIMAYGKFSEQ.

The 255-residue stretch at 39 to 293 (RLQKKSNDLT…KAVLEKQLHE (255 aa)) folds into the CoA carboxyltransferase C-terminal domain.

Belongs to the AccA family. In terms of assembly, acetyl-CoA carboxylase is a heterohexamer composed of biotin carboxyl carrier protein (AccB), biotin carboxylase (AccC) and two subunits each of ACCase subunit alpha (AccA) and ACCase subunit beta (AccD).

The protein localises to the cytoplasm. The catalysed reaction is N(6)-carboxybiotinyl-L-lysyl-[protein] + acetyl-CoA = N(6)-biotinyl-L-lysyl-[protein] + malonyl-CoA. The protein operates within lipid metabolism; malonyl-CoA biosynthesis; malonyl-CoA from acetyl-CoA: step 1/1. Its function is as follows. Component of the acetyl coenzyme A carboxylase (ACC) complex. First, biotin carboxylase catalyzes the carboxylation of biotin on its carrier protein (BCCP) and then the CO(2) group is transferred by the carboxyltransferase to acetyl-CoA to form malonyl-CoA. The protein is Acetyl-coenzyme A carboxylase carboxyl transferase subunit alpha of Neisseria meningitidis serogroup B (strain ATCC BAA-335 / MC58).